Reading from the N-terminus, the 103-residue chain is Small ribosomal subunit protein bS6c (103 aa).

It belongs to the bacterial ribosomal protein bS6 family.

Its subcellular location is the plastid. It is found in the chloroplast. Its function is as follows. Binds together with bS18 to 16S ribosomal RNA. The chain is Small ribosomal subunit protein bS6c from Thalassiosira pseudonana (Marine diatom).